A 147-amino-acid chain; its full sequence is Histone H2B (147 aa).

The span at 1–31 (MAPKAEKKPAEKKPAEEKKAVAEKAPAEKKP) shows a compositional bias: basic and acidic residues. The disordered stretch occupies residues 1-55 (MAPKAEKKPAEKKPAEEKKAVAEKAPAEKKPKAGKKLPKEGGAAAGDKKKKRVKK). 3 positions are modified to N6-acetyllysine: K7, K35, and K36. Residue K143 forms a Glycyl lysine isopeptide (Lys-Gly) (interchain with G-Cter in ubiquitin) linkage.

Belongs to the histone H2B family. The nucleosome is a histone octamer containing two molecules each of H2A, H2B, H3 and H4 assembled in one H3-H4 heterotetramer and two H2A-H2B heterodimers. The octamer wraps approximately 147 bp of DNA. In terms of processing, can be acetylated to form H2BK6ac, H2BK33ac and H2BK34ac. Post-translationally, monoubiquitinated to form H2BK143ub1; may give a specific tag for epigenetic transcriptional activation.

The protein localises to the nucleus. It localises to the chromosome. Its function is as follows. Core component of nucleosome. Nucleosomes wrap and compact DNA into chromatin, limiting DNA accessibility to the cellular machineries which require DNA as a template. Histones thereby play a central role in transcription regulation, DNA repair, DNA replication and chromosomal stability. DNA accessibility is regulated via a complex set of post-translational modifications of histones, also called histone code, and nucleosome remodeling. The polypeptide is Histone H2B (HIS2B) (Gossypium hirsutum (Upland cotton)).